Here is a 170-residue protein sequence, read N- to C-terminus: RNA pyrophosphohydrolase (170 aa).

Residues 6-149 (GFRPNVGIVI…KRDVYRRALK (144 aa)) enclose the Nudix hydrolase domain. The short motif at 38-59 (GGIDDGETPEQAMYRELYEEVG) is the Nudix box element.

It belongs to the Nudix hydrolase family. RppH subfamily. The cofactor is a divalent metal cation.

Functionally, accelerates the degradation of transcripts by removing pyrophosphate from the 5'-end of triphosphorylated RNA, leading to a more labile monophosphorylated state that can stimulate subsequent ribonuclease cleavage. The protein is RNA pyrophosphohydrolase of Aliivibrio salmonicida (strain LFI1238) (Vibrio salmonicida (strain LFI1238)).